An 89-amino-acid polypeptide reads, in one-letter code: Cell division topological specificity factor (89 aa).

The protein belongs to the MinE family.

Prevents the cell division inhibition by proteins MinC and MinD at internal division sites while permitting inhibition at polar sites. This ensures cell division at the proper site by restricting the formation of a division septum at the midpoint of the long axis of the cell. The polypeptide is Cell division topological specificity factor (Janthinobacterium sp. (strain Marseille) (Minibacterium massiliensis)).